Consider the following 356-residue polypeptide: NADH-quinone oxidoreductase subunit H (356 aa).

The next 9 membrane-spanning stretches (helical) occupy residues 22 to 42 (GVVSIKVIALIICLLLATAYL), 59 to 79 (PSLAGPFGLLQPIADAIKLVF), 93 to 113 (FIIAPIITFVLSLLGWSVIPI), 124 to 144 (IGGILFILAVTSLGVYGIIIA), 171 to 191 (MALSIVAVLIVTGEMDLIQIV), 198 to 218 (PIWLTIMMLPLAVIYFISILA), 240 to 260 (VEYSSMAFAMFFLGEYANMIL), 285 to 305 (IPGYIWFILKVSMVLFCFLWI), and 321 to 341 (GLKVFLPIVLAWIIVVSTILV).

The protein belongs to the complex I subunit 1 family. In terms of assembly, NDH-1 is composed of 14 different subunits. Subunits NuoA, H, J, K, L, M, N constitute the membrane sector of the complex.

The protein localises to the cell inner membrane. The catalysed reaction is a quinone + NADH + 5 H(+)(in) = a quinol + NAD(+) + 4 H(+)(out). NDH-1 shuttles electrons from NADH, via FMN and iron-sulfur (Fe-S) centers, to quinones in the respiratory chain. The immediate electron acceptor for the enzyme in this species is believed to be ubiquinone. Couples the redox reaction to proton translocation (for every two electrons transferred, four hydrogen ions are translocated across the cytoplasmic membrane), and thus conserves the redox energy in a proton gradient. This subunit may bind ubiquinone. This is NADH-quinone oxidoreductase subunit H from Orientia tsutsugamushi (strain Boryong) (Rickettsia tsutsugamushi).